A 297-amino-acid polypeptide reads, in one-letter code: NADPH-dependent 1-acyldihydroxyacetone phosphate reductase (297 aa).

The GXSXG motif lies at 16 to 20; it reads GASGG. The Nucleophile; for lipase activity role is filled by Ser18. Residues Ile21, Asp64, Asn93, Arg126, Tyr157, Lys161, Val190, and Thr192 each contribute to the NADP(+) site. The active-site Proton acceptor is the Tyr157. Catalysis depends on Lys161, which acts as the Lowers pKa of active site Tyr.

Belongs to the short-chain dehydrogenases/reductases (SDR) family.

It localises to the lipid droplet. The protein localises to the mitochondrion outer membrane. Its subcellular location is the endoplasmic reticulum. The catalysed reaction is a 1-acylglycerone 3-phosphate + NADPH + H(+) = a 1-acyl-sn-glycero-3-phosphate + NADP(+). The enzyme catalyses 1-hexadecanoyl-sn-glycero-3-phosphate + NADP(+) = 1-hexadecanoylglycerone 3-phosphate + NADPH + H(+). It carries out the reaction a triacylglycerol + H2O = a diacylglycerol + a fatty acid + H(+). It catalyses the reaction 1,2,3-tri-(9Z-octadecenoyl)-glycerol + H2O = di-(9Z)-octadecenoylglycerol + (9Z)-octadecenoate + H(+). Its activity is regulated as follows. Inhibited by divalent cations and N-ethylmaleimide. Activity is reduced under anaerobic growth conditions. In terms of biological role, can convert acyl and alkyl dihydroxyacetone-phosphate (DHAP) into glycerolipids and ether lipids, respectively. Required for the biosynthesis of phosphatidic acid via the DHAP pathway, where it reduces 1-acyl DHAP to lysophosphatidic acid (LPA). Also has triacylglycerol (TAG) lipase activity. Involved in the mobilization of the non-polar storage lipids triacylglycerols (TAGs) from lipid particles by hydrolysis of TAGs. Required for spore germination. Plays a role in cell wall biogenesis, but this effect may be indirect by affecting the activities of cell wall synthesis enzymes. Lipolysis of TAG by AYR1 is essential for starvation-induced autophagy. Forms an NADPH-regulated cation-selective channel in the mitochondrial outer membrane. This Saccharomyces cerevisiae (strain ATCC 204508 / S288c) (Baker's yeast) protein is NADPH-dependent 1-acyldihydroxyacetone phosphate reductase.